A 340-amino-acid chain; its full sequence is Ferrochelatase (340 aa).

Fe cation contacts are provided by histidine 189 and glutamate 292.

It belongs to the ferrochelatase family.

The protein resides in the cytoplasm. The enzyme catalyses heme b + 2 H(+) = protoporphyrin IX + Fe(2+). It functions in the pathway porphyrin-containing compound metabolism; protoheme biosynthesis; protoheme from protoporphyrin-IX: step 1/1. Catalyzes the ferrous insertion into protoporphyrin IX. This chain is Ferrochelatase, found in Ectopseudomonas mendocina (strain ymp) (Pseudomonas mendocina).